We begin with the raw amino-acid sequence, 447 residues long: UDP-N-acetylmuramate--L-alanine ligase (447 aa).

108-114 (GSHGKTS) lines the ATP pocket.

This sequence belongs to the MurCDEF family.

The protein resides in the cytoplasm. It carries out the reaction UDP-N-acetyl-alpha-D-muramate + L-alanine + ATP = UDP-N-acetyl-alpha-D-muramoyl-L-alanine + ADP + phosphate + H(+). The protein operates within cell wall biogenesis; peptidoglycan biosynthesis. Functionally, cell wall formation. This is UDP-N-acetylmuramate--L-alanine ligase from Listeria monocytogenes serovar 1/2a (strain ATCC BAA-679 / EGD-e).